We begin with the raw amino-acid sequence, 201 residues long: Proteasome subunit beta 1 (201 aa).

Residue Met-1 is a propeptide, removed in mature form; by autocatalysis. Residue Thr-2 is the Nucleophile of the active site.

The protein belongs to the peptidase T1B family. In terms of assembly, the 20S proteasome core is composed of 14 alpha and 14 beta subunits that assemble into four stacked heptameric rings, resulting in a barrel-shaped structure. The two inner rings, each composed of seven catalytic beta subunits, are sandwiched by two outer rings, each composed of seven alpha subunits. The catalytic chamber with the active sites is on the inside of the barrel. Has a gated structure, the ends of the cylinder being occluded by the N-termini of the alpha-subunits. Is capped at one or both ends by the proteasome regulatory ATPase, PAN.

It is found in the cytoplasm. The catalysed reaction is Cleavage of peptide bonds with very broad specificity.. The formation of the proteasomal ATPase PAN-20S proteasome complex, via the docking of the C-termini of PAN into the intersubunit pockets in the alpha-rings, triggers opening of the gate for substrate entry. Interconversion between the open-gate and close-gate conformations leads to a dynamic regulation of the 20S proteasome proteolysis activity. Component of the proteasome core, a large protease complex with broad specificity involved in protein degradation. This chain is Proteasome subunit beta 1, found in Pyrobaculum neutrophilum (strain DSM 2338 / JCM 9278 / NBRC 100436 / V24Sta) (Thermoproteus neutrophilus).